The primary structure comprises 579 residues: MADITEKTAEQLENLSLQDKQEGTNEENQSETVSASLYVGDLDPSVSEAHLYDIFSPIGAVSSIRVCRDAITKTSLGYAYVNFNDHDAAKTAIEKLNFTPIKGKLCRIMWSQRDPSLRKKGAGNIFIKNLHPDIDNKALYDTFSVFGNILSSKVATDETGKSKGFGYVHFEEDESASEAIDALNGMLLNGQEIYVGPHLSKKERESKFEEMKANFTNVYIKNINTETTDKEFEELVAKFGKTDSVVLERTPEGENKGFGFVNFVNHEDAVKCVEELNNTEFKGQPLYVNRAQKKYERQQELKKQYEATRMEKMAKYQGINLFIKNLDDSIDDKKLEEEFAPYGTITSAKVMTTENGKSKGFGFVCFSTPEEATKAITEKNQQIVAGKPLYVAIAQRKDVRRSQLAQQIQARNQMRFQQASAAAAAAAAAGMPGQFMPPMFYGVMPPRGVPFNGPNPQMANMGAMPKNGMPPHQFRNGPVYGVPPQGGFARNGPAANQFYQQKQRQALGEELYKRIFSRTNDEEAAGKITGMILDLPPQEVVPLLENDELFEQHFKEASAAYESFKQEQQQPQGEEAQQA.

A compositionally biased stretch (basic and acidic residues) spans 1–10; that stretch reads MADITEKTAE. Positions 1-32 are disordered; that stretch reads MADITEKTAEQLENLSLQDKQEGTNEENQSET. RRM domains are found at residues 35–113, 123–200, 216–293, and 319–396; these read ASLY…WSQR, GNIF…PHLS, TNVY…RAQK, and INLF…IAQR. Residues 487–566 form the PABC domain; it reads GFARNGPAAN…ASAAYESFKQ (80 aa). The interval 560 to 579 is disordered; it reads AYESFKQEQQQPQGEEAQQA. Low complexity predominate over residues 566 to 579; it reads QEQQQPQGEEAQQA.

It belongs to the polyadenylate-binding protein type-1 family.

It localises to the cytoplasm. It is found in the nucleus. Its function is as follows. Binds the poly(A) tail of mRNA. Appears to be an important mediator of the multiple roles of the poly(A) tail in mRNA biogenesis, stability and translation. In the nucleus, involved in both mRNA cleavage and polyadenylation. Is also required for efficient mRNA export to the cytoplasm. Acts in concert with a poly(A)-specific nuclease (PAN) to affect poly(A) tail shortening, which may occur concomitantly with either nucleocytoplasmic mRNA transport or translational initiation. In the cytoplasm, stimulates translation initiation and regulates mRNA decay through translation termination-coupled poly(A) shortening, probably mediated by PAN. This chain is Polyadenylate-binding protein, cytoplasmic and nuclear (PAB1), found in Candida glabrata (strain ATCC 2001 / BCRC 20586 / JCM 3761 / NBRC 0622 / NRRL Y-65 / CBS 138) (Yeast).